Reading from the N-terminus, the 908-residue chain is Transferrin-binding protein A (908 aa).

An N-terminal signal peptide occupies residues Met1–Ala24. The short motif at Asp38 to Lys45 is the TonB box element. A TBDR plug domain is found at Arg51–Lys176. Positions Gln187–Phe908 constitute a TBDR beta-barrel domain. The TonB C-terminal box signature appears at Asn891 to Phe908.

Belongs to the TonB-dependent receptor family. Binds both human apo- and holo-transferrin (TF), via the TF C-terminus. Forms a large complex with TF and TbpB.

Its subcellular location is the cell outer membrane. In terms of biological role, neisseria acquires iron by extracting it from serum transferrin (TF) in its human host. Acts as a TF receptor and is required for TF utilization. Binds both apo- and holo-TF, via the TF C-terminus. In Neisseria meningitidis serogroup B, this protein is Transferrin-binding protein A.